The sequence spans 181 residues: ATP synthase subunit delta (181 aa).

It belongs to the ATPase delta chain family. In terms of assembly, F-type ATPases have 2 components, F(1) - the catalytic core - and F(0) - the membrane proton channel. F(1) has five subunits: alpha(3), beta(3), gamma(1), delta(1), epsilon(1). F(0) has three main subunits: a(1), b(2) and c(10-14). The alpha and beta chains form an alternating ring which encloses part of the gamma chain. F(1) is attached to F(0) by a central stalk formed by the gamma and epsilon chains, while a peripheral stalk is formed by the delta and b chains.

It localises to the cell membrane. In terms of biological role, f(1)F(0) ATP synthase produces ATP from ADP in the presence of a proton or sodium gradient. F-type ATPases consist of two structural domains, F(1) containing the extramembraneous catalytic core and F(0) containing the membrane proton channel, linked together by a central stalk and a peripheral stalk. During catalysis, ATP synthesis in the catalytic domain of F(1) is coupled via a rotary mechanism of the central stalk subunits to proton translocation. This protein is part of the stalk that links CF(0) to CF(1). It either transmits conformational changes from CF(0) to CF(1) or is implicated in proton conduction. In Lacticaseibacillus casei (strain BL23) (Lactobacillus casei), this protein is ATP synthase subunit delta.